A 174-amino-acid chain; its full sequence is Cathepsin B-like cysteine proteinase 3 (174 aa).

2 disulfide bridges follow: Cys22/Cys55 and Cys30/Cys42. Catalysis depends on residues His122 and Asn142.

The protein belongs to the peptidase C1 family.

Its function is as follows. Expression of the protease correlates with blood-feeding and suggests a role for the protease in blood digestion. The polypeptide is Cathepsin B-like cysteine proteinase 3 (CP-3) (Ostertagia ostertagi (Brown stomach worm)).